The primary structure comprises 320 residues: R2-like ligand binding oxidase (320 aa).

Mn(2+)-binding residues include Glu68, Glu101, and His104. A cross-link (3-(O4'-tyrosyl)-valine (Val-Tyr)) is located at residues 71 to 162 (VTKDIQPFMS…AAQVRASVVY (92 aa)). Glu101 contacts Fe cation. Glu167, Glu202, and His205 together coordinate Fe cation.

This sequence belongs to the ribonucleoside diphosphate reductase small chain family. R2-like ligand binding oxidase subfamily. In terms of assembly, homodimer. Fe cation serves as cofactor. Requires Mn(2+) as cofactor.

Probable oxidase that might be involved in lipid metabolism. The chain is R2-like ligand binding oxidase (nrdB) from Mycolicibacterium smegmatis (strain ATCC 700084 / mc(2)155) (Mycobacterium smegmatis).